Here is an 84-residue protein sequence, read N- to C-terminus: Tenecin-1 (84 aa).

The signal sequence occupies residues 1 to 19 (MKLTIFALVACFFILQIAA). The propeptide occupies 20 to 41 (FPLEEAATAEEIEQGEHIRVKR). 3 disulfides stabilise this stretch: Cys44-Cys75, Cys61-Cys81, and Cys65-Cys83.

Belongs to the invertebrate defensin family. Type 1 subfamily.

The protein resides in the secreted. Functionally, bactericidal protein produced in response to injury. It is cytotoxic to Gram-positive bacteria. This is Tenecin-1 from Tenebrio molitor (Yellow mealworm beetle).